A 322-amino-acid chain; its full sequence is D-alanine--D-alanine ligase (322 aa).

In terms of domain architecture, ATP-grasp spans 110 to 310 (KAVLAAAGIP…FDRLVFWIVE (201 aa)). 137-191 (MPPPYVVKPNAEGSSVGVSLVFEGANGPPRQLAAPDWAFGEQVMVEPYIPGLELA) is a binding site for ATP. Residues Asp-263, Glu-277, and Asn-279 each coordinate Mg(2+).

Belongs to the D-alanine--D-alanine ligase family. Requires Mg(2+) as cofactor. It depends on Mn(2+) as a cofactor.

The protein localises to the cytoplasm. The enzyme catalyses 2 D-alanine + ATP = D-alanyl-D-alanine + ADP + phosphate + H(+). It participates in cell wall biogenesis; peptidoglycan biosynthesis. Functionally, cell wall formation. The sequence is that of D-alanine--D-alanine ligase from Caulobacter sp. (strain K31).